Here is a 353-residue protein sequence, read N- to C-terminus: Heat-inducible transcription repressor HrcA (353 aa).

The protein belongs to the HrcA family.

Its function is as follows. Negative regulator of class I heat shock genes (grpE-dnaK-dnaJ and groELS operons). Prevents heat-shock induction of these operons. In Synechococcus elongatus (strain ATCC 33912 / PCC 7942 / FACHB-805) (Anacystis nidulans R2), this protein is Heat-inducible transcription repressor HrcA.